The chain runs to 308 residues: Exosporium protein A (308 aa).

The protein resides in the spore wall. The sequence is that of Exosporium protein A from Clostridium sporogenes (strain ATCC 15579).